Here is a 272-residue protein sequence, read N- to C-terminus: Shikimate dehydrogenase (NADP(+)) (272 aa).

Shikimate is bound by residues 14 to 16 (SKS) and threonine 61. Lysine 65 serves as the catalytic Proton acceptor. Glutamate 77 is a binding site for NADP(+). 2 residues coordinate shikimate: asparagine 86 and aspartate 102. NADP(+) contacts are provided by residues 126–130 (GAGGA), 149–154 (NRTASR), and methionine 213. Residue tyrosine 215 participates in shikimate binding. An NADP(+)-binding site is contributed by glycine 237.

The protein belongs to the shikimate dehydrogenase family. As to quaternary structure, homodimer.

The enzyme catalyses shikimate + NADP(+) = 3-dehydroshikimate + NADPH + H(+). It participates in metabolic intermediate biosynthesis; chorismate biosynthesis; chorismate from D-erythrose 4-phosphate and phosphoenolpyruvate: step 4/7. Involved in the biosynthesis of the chorismate, which leads to the biosynthesis of aromatic amino acids. Catalyzes the reversible NADPH linked reduction of 3-dehydroshikimate (DHSA) to yield shikimate (SA). The polypeptide is Shikimate dehydrogenase (NADP(+)) (Salmonella heidelberg (strain SL476)).